We begin with the raw amino-acid sequence, 308 residues long: 2-dehydro-3-deoxy-phosphogluconate/2-dehydro-3-deoxy-6-phosphogalactonate aldolase (308 aa).

Substrate-binding positions include 57–58, 144–146, and 169–171; these read TT, YNY, and KDT. Lys-169 acts as the Schiff-base intermediate with substrate in catalysis.

It belongs to the DapA family. KDPG aldolase subfamily. Homotetramer; dimer of dimers.

It carries out the reaction 2-dehydro-3-deoxy-6-phospho-D-gluconate = D-glyceraldehyde 3-phosphate + pyruvate. The enzyme catalyses 2-dehydro-3-deoxy-6-phospho-D-galactonate = D-glyceraldehyde 3-phosphate + pyruvate. It functions in the pathway carbohydrate acid metabolism; 2-dehydro-3-deoxy-D-gluconate degradation; D-glyceraldehyde 3-phosphate and pyruvate from 2-dehydro-3-deoxy-D-gluconate: step 2/2. In terms of biological role, involved in the degradation of glucose and galactose via the Entner-Doudoroff pathway. Catalyzes the reversible cleavage of 2-keto-3-deoxy-6-phosphogluconate (KDPG) and 2-keto-3-deoxygluconate (KDG) forming pyruvate and glyceraldehyde 3-phosphate or glyceraldehyde, respectively. It is also able to catalyze the reversible cleavage of 2-keto-3-deoxy-6-phosphogalactonate (KDPGal) and 2-keto-3-deoxygalactonate (KDGal). In Saccharolobus solfataricus (strain ATCC 35092 / DSM 1617 / JCM 11322 / P2) (Sulfolobus solfataricus), this protein is 2-dehydro-3-deoxy-phosphogluconate/2-dehydro-3-deoxy-6-phosphogalactonate aldolase (eda).